Here is a 197-residue protein sequence, read N- to C-terminus: Peptide deformylase (197 aa).

2 residues coordinate Fe cation: cysteine 106 and histidine 148. The active site involves glutamate 149. Histidine 152 provides a ligand contact to Fe cation.

This sequence belongs to the polypeptide deformylase family. Fe(2+) serves as cofactor.

It carries out the reaction N-terminal N-formyl-L-methionyl-[peptide] + H2O = N-terminal L-methionyl-[peptide] + formate. Functionally, removes the formyl group from the N-terminal Met of newly synthesized proteins. Requires at least a dipeptide for an efficient rate of reaction. N-terminal L-methionine is a prerequisite for activity but the enzyme has broad specificity at other positions. In Mycobacterium leprae (strain TN), this protein is Peptide deformylase.